A 500-amino-acid chain; its full sequence is NAD(P)H-quinone oxidoreductase chain 4, chloroplastic (500 aa).

14 helical membrane-spanning segments follow: residues 4–24, 35–55, 87–107, 111–131, 134–154, 167–187, 211–231, 242–262, 274–294, 313–333, 334–354, 386–406, 417–437, and 462–482; these read FPWL…IFFL, YTIA…CYHF, LGSI…AWPV, SQLF…LFSS, LLLF…LLSM, FILY…GMGL, ILLY…IPLH, HYST…YGLI, YLFS…AALT, MGFI…GAIL, QILS…TACD, LALP…GLIT, LITF…LSML, and LFLL…PDFV.

Belongs to the complex I subunit 4 family.

The protein localises to the plastid. It localises to the chloroplast thylakoid membrane. The enzyme catalyses a plastoquinone + NADH + (n+1) H(+)(in) = a plastoquinol + NAD(+) + n H(+)(out). It catalyses the reaction a plastoquinone + NADPH + (n+1) H(+)(in) = a plastoquinol + NADP(+) + n H(+)(out). This chain is NAD(P)H-quinone oxidoreductase chain 4, chloroplastic, found in Saccharum hybrid (Sugarcane).